A 647-amino-acid chain; its full sequence is Threonine--tRNA ligase (647 aa).

The TGS domain occupies Met-1–Thr-61. Residues Asp-242 to Pro-540 are catalytic. The Zn(2+) site is built by Cys-336, His-387, and His-517.

It belongs to the class-II aminoacyl-tRNA synthetase family. As to quaternary structure, homodimer. Requires Zn(2+) as cofactor.

The protein resides in the cytoplasm. It catalyses the reaction tRNA(Thr) + L-threonine + ATP = L-threonyl-tRNA(Thr) + AMP + diphosphate + H(+). Functionally, catalyzes the attachment of threonine to tRNA(Thr) in a two-step reaction: L-threonine is first activated by ATP to form Thr-AMP and then transferred to the acceptor end of tRNA(Thr). Also edits incorrectly charged L-seryl-tRNA(Thr). This is Threonine--tRNA ligase from Streptococcus pneumoniae (strain JJA).